The primary structure comprises 380 residues: Succinyl-diaminopimelate desuccinylase (380 aa).

Histidine 69 provides a ligand contact to Zn(2+). Residue aspartate 71 is part of the active site. Residue aspartate 102 coordinates Zn(2+). Glutamate 136 functions as the Proton acceptor in the catalytic mechanism. Zn(2+) is bound by residues glutamate 137, glutamate 165, and histidine 351.

It belongs to the peptidase M20A family. DapE subfamily. In terms of assembly, homodimer. Zn(2+) serves as cofactor. Co(2+) is required as a cofactor.

The enzyme catalyses N-succinyl-(2S,6S)-2,6-diaminopimelate + H2O = (2S,6S)-2,6-diaminopimelate + succinate. It functions in the pathway amino-acid biosynthesis; L-lysine biosynthesis via DAP pathway; LL-2,6-diaminopimelate from (S)-tetrahydrodipicolinate (succinylase route): step 3/3. Functionally, catalyzes the hydrolysis of N-succinyl-L,L-diaminopimelic acid (SDAP), forming succinate and LL-2,6-diaminopimelate (DAP), an intermediate involved in the bacterial biosynthesis of lysine and meso-diaminopimelic acid, an essential component of bacterial cell walls. The chain is Succinyl-diaminopimelate desuccinylase from Bordetella petrii (strain ATCC BAA-461 / DSM 12804 / CCUG 43448).